A 633-amino-acid polypeptide reads, in one-letter code: Phospholipid--sterol O-acyltransferase (633 aa).

Topologically, residues 1-6 (MGANSK) are cytoplasmic. Residues 7–29 (SVTASFTVIAVFFLICGGRTAVE) form a helical; Signal-anchor for type II membrane protein membrane-spanning segment. Residues 30 to 633 (DETEFHGDYS…TSANMLLQYI (604 aa)) are Lumenal-facing. The active-site Acyl-ester intermediate is Ser-195. Residues Asp-461 and His-505 each act as charge relay system in the active site.

This sequence belongs to the AB hydrolase superfamily. Lipase family.

The protein resides in the microsome membrane. In terms of biological role, involved in lipid catabolism. Essential for sterol esters biosynthesis in leaves and seeds, but not in flowers. Plays a role in controlling the free sterol content of leaves. Catalyzes the transacylation of acyl groups from phospholipids to a variety of different sterols. Prefers phosphatidylethanolamine over phosphatidylcholine as an acyl donor. Not active toward neutral lipids. Highly specific for position sn-2, which in plant lipids is essentially devoid of saturated acyl groups. Broad sterol specificity (cholesterol &gt; campesterol &gt; sitosterol &gt; stigmasterol), but no activity with lupeol or beta-amyrin. The polypeptide is Phospholipid--sterol O-acyltransferase (PSAT) (Arabidopsis thaliana (Mouse-ear cress)).